A 404-amino-acid polypeptide reads, in one-letter code: Probable tRNA sulfurtransferase (404 aa).

Residues 60 to 165 form the THUMP domain; that stretch reads EEVIPKLSKV…KDAAYLSYET (106 aa). ATP contacts are provided by residues 183 to 184, 208 to 209, R265, G287, and Q296; these read ML and HF.

It belongs to the ThiI family.

Its subcellular location is the cytoplasm. It carries out the reaction [ThiI sulfur-carrier protein]-S-sulfanyl-L-cysteine + a uridine in tRNA + 2 reduced [2Fe-2S]-[ferredoxin] + ATP + H(+) = [ThiI sulfur-carrier protein]-L-cysteine + a 4-thiouridine in tRNA + 2 oxidized [2Fe-2S]-[ferredoxin] + AMP + diphosphate. It catalyses the reaction [ThiS sulfur-carrier protein]-C-terminal Gly-Gly-AMP + S-sulfanyl-L-cysteinyl-[cysteine desulfurase] + AH2 = [ThiS sulfur-carrier protein]-C-terminal-Gly-aminoethanethioate + L-cysteinyl-[cysteine desulfurase] + A + AMP + 2 H(+). It functions in the pathway cofactor biosynthesis; thiamine diphosphate biosynthesis. In terms of biological role, catalyzes the ATP-dependent transfer of a sulfur to tRNA to produce 4-thiouridine in position 8 of tRNAs, which functions as a near-UV photosensor. Also catalyzes the transfer of sulfur to the sulfur carrier protein ThiS, forming ThiS-thiocarboxylate. This is a step in the synthesis of thiazole, in the thiamine biosynthesis pathway. The sulfur is donated as persulfide by IscS. This is Probable tRNA sulfurtransferase from Enterococcus faecalis (strain ATCC 700802 / V583).